The sequence spans 363 residues: NAD(P)H-quinone oxidoreductase subunit 1, chloroplastic (363 aa).

Transmembrane regions (helical) follow at residues 30-50, 104-124, 127-147, 248-268, 300-320, and 343-363; these read LIPI…IVWL, IAVI…HLVL, LSIG…GLLM, YSGI…LVSS, VFGT…FLFI, and FLLP…LISL.

Belongs to the complex I subunit 1 family. In terms of assembly, NDH is composed of at least 16 different subunits, 5 of which are encoded in the nucleus.

It is found in the plastid. The protein localises to the chloroplast thylakoid membrane. It catalyses the reaction a plastoquinone + NADH + (n+1) H(+)(in) = a plastoquinol + NAD(+) + n H(+)(out). The enzyme catalyses a plastoquinone + NADPH + (n+1) H(+)(in) = a plastoquinol + NADP(+) + n H(+)(out). Functionally, NDH shuttles electrons from NAD(P)H:plastoquinone, via FMN and iron-sulfur (Fe-S) centers, to quinones in the photosynthetic chain and possibly in a chloroplast respiratory chain. The immediate electron acceptor for the enzyme in this species is believed to be plastoquinone. Couples the redox reaction to proton translocation, and thus conserves the redox energy in a proton gradient. This chain is NAD(P)H-quinone oxidoreductase subunit 1, chloroplastic, found in Lactuca sativa (Garden lettuce).